We begin with the raw amino-acid sequence, 494 residues long: Cytochrome P450 2C23 (494 aa).

Ser-131 bears the Phosphoserine mark. Residues Lys-253 and Lys-379 each carry the N6-acetyllysine modification. Cys-439 is a heme binding site.

This sequence belongs to the cytochrome P450 family. The cofactor is heme. In terms of tissue distribution, expressed in kidney and liver. Expressed in cortical tubules of kidney (at protein level).

It localises to the endoplasmic reticulum membrane. The protein resides in the microsome membrane. It catalyses the reaction (5Z,8Z,11Z,14Z)-eicosatetraenoate + reduced [NADPH--hemoprotein reductase] + O2 = (8R,9S)-epoxy-(5Z,11Z,14Z)-eicosatrienoate + oxidized [NADPH--hemoprotein reductase] + H2O + H(+). The catalysed reaction is (5Z,8Z,11Z,14Z)-eicosatetraenoate + reduced [NADPH--hemoprotein reductase] + O2 = (11R,12S)-epoxy-(5Z,8Z,14Z)-eicosatrienoate + oxidized [NADPH--hemoprotein reductase] + H2O + H(+). The enzyme catalyses (5Z,8Z,11Z,14Z)-eicosatetraenoate + reduced [NADPH--hemoprotein reductase] + O2 = (11S,12R)-epoxy-(5Z,8Z,14Z)-eicosatrienoate + oxidized [NADPH--hemoprotein reductase] + H2O + H(+). It carries out the reaction (5Z,8Z,11Z,14Z)-eicosatetraenoate + reduced [NADPH--hemoprotein reductase] + O2 = (14R,15S)-epoxy-(5Z,8Z,11Z)-eicosatrienoate + oxidized [NADPH--hemoprotein reductase] + H2O + H(+). It catalyses the reaction (5Z,8Z,11Z,14Z)-eicosatetraenoate + reduced [NADPH--hemoprotein reductase] + O2 = (14S,15R)-epoxy-(5Z,8Z,11Z)-eicosatrienoate + oxidized [NADPH--hemoprotein reductase] + H2O + H(+). The catalysed reaction is (5Z,8Z,11Z,14Z,17Z)-eicosapentaenoate + reduced [NADPH--hemoprotein reductase] + O2 = 8,9-epoxy-(5Z,11Z,14Z,17Z)-eicosatetraenoate + oxidized [NADPH--hemoprotein reductase] + H2O + H(+). The enzyme catalyses (5Z,8Z,11Z,14Z,17Z)-eicosapentaenoate + reduced [NADPH--hemoprotein reductase] + O2 = 11,12-epoxy-(5Z,8Z,14Z,17Z)-eicosatetraenoate + oxidized [NADPH--hemoprotein reductase] + H2O + H(+). It carries out the reaction (5Z,8Z,11Z,14Z,17Z)-eicosapentaenoate + reduced [NADPH--hemoprotein reductase] + O2 = 14,15-epoxy-(5Z,8Z,11Z,17Z)-eicosatetraenoate + oxidized [NADPH--hemoprotein reductase] + H2O + H(+). It catalyses the reaction (5Z,8Z,11Z,14Z,17Z)-eicosapentaenoate + reduced [NADPH--hemoprotein reductase] + O2 = (17R,18S)-epoxy-(5Z,8Z,11Z,14Z)-eicosatetraenoate + oxidized [NADPH--hemoprotein reductase] + H2O + H(+). The catalysed reaction is (5Z,8Z,11Z,14Z,17Z)-eicosapentaenoate + reduced [NADPH--hemoprotein reductase] + O2 = (17S,18R)-epoxy-(5Z,8Z,11Z,14Z)-eicosatetraenoate + oxidized [NADPH--hemoprotein reductase] + H2O + H(+). The enzyme catalyses 20-hydroxy-(5Z,8Z,11Z,14Z)-eicosatetraenoate + reduced [NADPH--hemoprotein reductase] + O2 = 20-hydroxy-8,9-epoxy-(5Z,11Z,14Z)-eicosatrienoate + oxidized [NADPH--hemoprotein reductase] + H2O + H(+). The protein operates within lipid metabolism; arachidonate metabolism. Its function is as follows. A cytochrome P450 monooxygenase involved in polyunsaturated fatty acids (PUFAs) metabolism and signaling. Catalyzes preferentially the epoxidation of double bonds of PUFAs. Converts arachidonic acid (ARA, C20:4(n-6)) primarily to stereospecific products 8R,9S-, 11R,12S-, and 14S,15R-EET. Plays a major role in the formation of EETs and hydroxy-EETs (HEETs) in kidney. Via EETs may inhibit the epithelial sodium channels (ENaCs) in nephron segments, preventing excessive sodium absorption during high dietary salt intake. Participates in the formation of anti-inflammatory hydroxyepoxyeicosatrienoic acids (HEETs) by converting 20-hydroxyeicosatetraenoic acid (20-HETE) to 20,8,9-HEET, an activator of PPARA. Metabolizes eicosapentaenoic acid (EPA, C20:5(n-3)) to epoxyeicosatetraenoic acid (EETeTr) regioisomers, 8,9-, 11,12-, 14,15-, and 17,18-EETeTr, preferentially producing 17R,18S enantiomer. Mechanistically, uses molecular oxygen inserting one oxygen atom into a substrate, and reducing the second into a water molecule, with two electrons provided by NADPH via cytochrome P450 reductase (NADPH--hemoprotein reductase). The protein is Cytochrome P450 2C23 of Rattus norvegicus (Rat).